We begin with the raw amino-acid sequence, 1254 residues long: Vitamin B12-dependent ribonucleotide reductase (1254 aa).

Substrate is bound by residues S153, 198–199, G230, 474–478, and 675–679; these read AC, NPCSE, and PTGTI. C199 and C487 are disulfide-bonded. N474 (proton acceptor) is an active-site residue. The Cysteine radical intermediate role is filled by C476. The active-site Proton acceptor is E478.

Belongs to the ribonucleoside diphosphate reductase class-2 family. The cofactor is adenosylcob(III)alamin.

It carries out the reaction a 2'-deoxyribonucleoside 5'-diphosphate + [thioredoxin]-disulfide + H2O = a ribonucleoside 5'-diphosphate + [thioredoxin]-dithiol. In terms of biological role, catalyzes the reduction of ribonucleotides to deoxyribonucleotides. May function to provide a pool of deoxyribonucleotide precursors for DNA repair during oxygen limitation and/or for immediate growth after restoration of oxygen. The polypeptide is Vitamin B12-dependent ribonucleotide reductase (nrdJ) (Bradyrhizobium diazoefficiens (strain JCM 10833 / BCRC 13528 / IAM 13628 / NBRC 14792 / USDA 110)).